We begin with the raw amino-acid sequence, 591 residues long: Fidgetin-like protein 1 (591 aa).

Disordered stretches follow at residues 1 to 117 and 223 to 249; these read MYSP…KSSL and GQEPQKSKFQIPLDRQSSSQSNHSQPI. A compositionally biased stretch (basic and acidic residues) spans 17-26; that stretch reads KRPETEENRG. The segment covering 76 to 93 has biased composition (acidic residues); the sequence is DDDPESIVIDEDDEEDEP. The span at 237-249 shows a compositional bias: polar residues; that stretch reads RQSSSQSNHSQPI. Residues A319 and 359 to 364 contribute to the ATP site; that span reads GTGKTM.

The protein belongs to the AAA ATPase family. Hexamer. Mg(2+) serves as cofactor.

The protein localises to the nucleus. It carries out the reaction ATP + H2O = ADP + phosphate + H(+). Functionally, has a role in spindle assembly which acts in the progression through mitosis during embryogenesis. Required for fertility. The chain is Fidgetin-like protein 1 (figl-1) from Caenorhabditis briggsae.